A 582-amino-acid polypeptide reads, in one-letter code: Insulin-like growth factor 2 mRNA-binding protein 3 (582 aa).

2 consecutive RRM domains span residues 2 to 75 (NKLY…HSVP) and 81 to 156 (CKLQ…YIPD). The tract at residues 164 to 190 (PAVGGRRGFNPRGPPRQGSPSLGARPK) is disordered. A Phosphoserine modification is found at Ser182. KH domains lie at 194–259 (DVPL…CRNI), 275–342 (EIPL…EEEI), 408–473 (SETV…QGRI), and 490–556 (KLEA…QRKI). The tract at residues 562 to 582 (QVRRQQQPKPSAAGPPVARRK) is disordered.

The protein belongs to the RRM IMP/VICKZ family. In terms of assembly, homodimer and multimer.

It is found in the cytoplasm. The protein localises to the nucleus. Its subcellular location is the P-body. It localises to the stress granule. Functionally, RNA-binding factor that may recruit target transcripts to cytoplasmic protein-RNA complexes (mRNPs). This transcript 'caging' into mRNPs allows mRNA transport and transient storage. It also modulates the rate and location at which target transcripts encounter the translational apparatus and shields them from endonuclease attacks or microRNA-mediated degradation. Preferentially binds to N6-methyladenosine (m6A)-containing mRNAs and increases their stability. Involved in neuronal crest migration. The protein is Insulin-like growth factor 2 mRNA-binding protein 3 (igf2bp3) of Danio rerio (Zebrafish).